The following is a 1523-amino-acid chain: Dicer-like protein 1 (1523 aa).

Positions 24 to 38 are enriched in polar residues; the sequence is LNLSGERTISTTEPT. Residues 24–58 are disordered; that stretch reads LNLSGERTISTTEPTEGNDSSSEESGDNEQISTQR. Residues 123-304 enclose the Helicase ATP-binding domain; sequence LFERAKSQNT…ESATKLEVLL (182 aa). 136–143 is a binding site for ATP; sequence LDTGSGKT. A DEAH box motif is present at residues 249-252; sequence DEAH. A Helicase C-terminal domain is found at 444 to 617; that stretch reads LLRQKLIKYF…GIDSEIDSIL (174 aa). Residues 640–730 enclose the Dicer dsRNA-binding fold domain; the sequence is ALAILARYAS…NSVYHRRLPA (91 aa). Residues 879 to 1007 form the PAZ domain; sequence ELLHLVHENE…VCIEPLRISA (129 aa). 2 RNase III domains span residues 1031–1190 and 1241–1392; these read IALE…LSGG and GRKV…VDSD. Positions 1281, 1378, and 1381 each coordinate Mg(2+). One can recognise a DRBM domain in the interval 1426–1494; it reads TFLQNRLTNE…SEKALSVLEN (69 aa). Zn(2+)-binding residues include cysteine 1438, histidine 1465, cysteine 1506, and cysteine 1508.

This sequence belongs to the helicase family. Dicer subfamily. It depends on Mg(2+) as a cofactor. Mn(2+) serves as cofactor.

Dicer-like endonuclease involved in cleaving double-stranded RNA in the RNA interference (RNAi) pathway. Produces 21 to 25 bp dsRNAs (siRNAs) which target the selective destruction of homologous RNAs leading to sequence-specific suppression of gene expression, called post-transcriptional gene silencing (PTGS). Part of a broad host defense response against viral infection and transposons. The chain is Dicer-like protein 1 (dcl1) from Aspergillus oryzae (strain ATCC 42149 / RIB 40) (Yellow koji mold).